The primary structure comprises 543 residues: Steroid receptor seven-up, isoforms B/C (543 aa).

Positions 38-191 (PPHSAWHEPP…HSQSSNSGSQ (154 aa)) are disordered. Positions 56–68 (AASAGPGTTTGSV) are enriched in low complexity. Over residues 83–101 (QQSAVIKQDLSCPSLNQAG) the composition is skewed to polar residues. Gly residues predominate over residues 122-141 (GSAGGHHSGSGSGSGSGVNP). Residues 158-170 (MLTSIKGQPTGCG) show a composition bias toward polar residues. The segment covering 171–191 (STTPSSQANSSHSQSSNSGSQ) has biased composition (low complexity). A DNA-binding region (nuclear receptor) is located at residues 197–272 (NIECVVCGDK…MGMRREAVQR (76 aa)). 2 NR C4-type zinc fingers span residues 200–220 (CVVC…CEGC) and 236–260 (CRGS…LKKC). The region spanning 307–532 (YLSSYISLLL…TLIRDMLLSG (226 aa)) is the NR LBD domain.

Belongs to the nuclear hormone receptor family. NR2 subfamily. Expressed in several embryonic tissues; dorsal vessel, oenocyte and fat body. CNS expression is dynamic and confined to temporally restricted subsections of the NB lineage; expressed in many NB and GMCs, but only a small number of neurons.

The protein resides in the nucleus. Its function is as follows. Receptor that is required in photoreceptors R1, R3, R4 and R6 during eye development; generation of the ganglion mother cell-2 (GMC-2) fate in the nb7-3 lineage, coinciding with the transition in the expression of HB to KR in the neuroblasts (NBs). This chain is Steroid receptor seven-up, isoforms B/C (svp), found in Drosophila melanogaster (Fruit fly).